Reading from the N-terminus, the 429-residue chain is Acetyltransferase pyr8 (429 aa).

9 helical membrane passes run 12-32 (IAQE…VIIT), 39-56 (LRLA…RFSL), 69-89 (GVAA…LLIT), 154-174 (YVLR…LIHM), 221-241 (VCLN…RISA), 300-320 (IFFT…ILGI), 324-344 (GSGA…EDGV), 365-385 (LVGF…YLYP), and 409-429 (VAQK…GGEI).

Belongs to the wax synthase family.

It localises to the membrane. The protein operates within secondary metabolite biosynthesis; terpenoid biosynthesis. Acetyltransferase; part of the gene cluster that mediates the biosynthesis of pyripyropene A, a specific human acyl-coenzyme A:cholesterol acyltransferase 2 inhibitor. The first step of the pathway is the synthesis of nicotinyl-CoA from nicotinic acid by the nicotinic acid-CoA ligase pyr1. Nicotinyl-CoA is then a substrate of polyketide synthase pyr2 to produce 4-hydroxy-6-(3-pyridinyl)-2H-pyran-2-one (HPPO) which is further prenylated by the polyprenyl transferase pyr6 to yield farnesyl-HPPO. The next steps consist of an epoxidation of farnesyl-HPPO to epoxyfarnesyl-HPPO by FAD-dependent monooxygenase pyr5 and a cyclization of the terpenoid portion by the terpene cyclase pyr4 to yield deacetyl-pyripyropene E. The 2 cytochrome P450 monooxygenases pyr3 and pyr9, and the 2 acetyltransferases pyr7 and pyr8 are involved in the conversion of deacetyl-pyripyropene E into pyripyropene A through several cycles of oxidation and acetylation steps. Pyr7 acetylates deacetyl-pyripyropene E to pyripyropene E which is oxidized to 11-deacetyl-pyripyropene O by pyr3, which is in turn acetylated into pyripyropene O by pyr8. Pyripyropene O is then oxidized to deacetyl-pyripyropene A by pyr9. Deacetyl-pyripyropene A is finally acetylated to pyripyropene A by pyr8. This is Acetyltransferase pyr8 from Aspergillus fumigatus (strain ATCC MYA-4609 / CBS 101355 / FGSC A1100 / Af293) (Neosartorya fumigata).